The chain runs to 58 residues: UPF0339 protein MA_3316 (58 aa).

The protein belongs to the UPF0339 family.

The polypeptide is UPF0339 protein MA_3316 (Methanosarcina acetivorans (strain ATCC 35395 / DSM 2834 / JCM 12185 / C2A)).